The chain runs to 145 residues: MKLLVVNGPNLNMLGKRDRNVYGNFTYDDLVRMIEDWAKRNGVEVEVFQSNHEGEIIDRLHRLDFDGLVINPGAFTHYSYAIRDALEIVKVPKVEVHISNIHGREEFRRKSVTAEVCDGQISGLGAYGYILALEYVRKVSSESSK.

Catalysis depends on Tyr22, which acts as the Proton acceptor. Asn71, His77, and Asp84 together coordinate substrate. His97 serves as the catalytic Proton donor. Substrate-binding positions include 98 to 99 and Arg108; that span reads IS.

Belongs to the type-II 3-dehydroquinase family. In terms of assembly, homododecamer.

It catalyses the reaction 3-dehydroquinate = 3-dehydroshikimate + H2O. The protein operates within metabolic intermediate biosynthesis; chorismate biosynthesis; chorismate from D-erythrose 4-phosphate and phosphoenolpyruvate: step 3/7. Functionally, catalyzes a trans-dehydration via an enolate intermediate. The polypeptide is 3-dehydroquinate dehydratase (Thermotoga neapolitana (strain ATCC 49049 / DSM 4359 / NBRC 107923 / NS-E)).